The sequence spans 624 residues: Mannosyl-oligosaccharide 1,2-alpha-mannosidase MNS3 (624 aa).

The Cytoplasmic segment spans residues 1–43; that stretch reads MSKSLPYSVKDIHYDNAKFRHRSPLKVFSQSLLTLSTKRNYAS. The chain crosses the membrane as a helical; Signal-anchor for type II membrane protein span at residues 44–64; sequence CSTGKFLILILFFGVACLMLM. Over 65–624 the chain is Lumenal; sequence SKSPNESGLN…AHPLPIRRNT (560 aa). N-linked (GlcNAc...) asparagine glycosylation is found at asparagine 69 and asparagine 114. Positions 91–123 are disordered; that stretch reads LRKPPRLPPRLSPDEGQLRGSSTNGSTISNSDP. Residues 110 to 121 are compositionally biased toward low complexity; it reads GSSTNGSTISNS. The active-site Proton donor is the glutamate 212. Asparagine 236 carries an N-linked (GlcNAc...) asparagine glycan. The active site involves aspartate 357. N-linked (GlcNAc...) asparagine glycosylation occurs at asparagine 377. The cysteines at positions 428 and 471 are disulfide-linked. The active-site Proton donor is the glutamate 485. Asparagine 503 carries an N-linked (GlcNAc...) asparagine glycan. Glutamate 526 is an active-site residue. Threonine 613 contributes to the Ca(2+) binding site.

It belongs to the glycosyl hydrolase 47 family. Ca(2+) is required as a cofactor. The cofactor is Mn(2+). Mg(2+) serves as cofactor. In terms of tissue distribution, expressed in flowers, siliques, stems, leaves, roots, stamens and sepals.

Its subcellular location is the golgi apparatus. It is found in the cis-Golgi network membrane. It catalyses the reaction N(4)-(alpha-D-Man-(1-&gt;2)-alpha-D-Man-(1-&gt;2)-alpha-D-Man-(1-&gt;3)-[alpha-D-Man-(1-&gt;2)-alpha-D-Man-(1-&gt;3)-[alpha-D-Man-(1-&gt;2)-alpha-D-Man-(1-&gt;6)]-alpha-D-Man-(1-&gt;6)]-beta-D-Man-(1-&gt;4)-beta-D-GlcNAc-(1-&gt;4)-beta-D-GlcNAc)-L-asparaginyl-[protein] (N-glucan mannose isomer 9A1,2,3B1,2,3) + 4 H2O = N(4)-(alpha-D-Man-(1-&gt;3)-[alpha-D-Man-(1-&gt;3)-[alpha-D-Man-(1-&gt;6)]-alpha-D-Man-(1-&gt;6)]-beta-D-Man-(1-&gt;4)-beta-D-GlcNAc-(1-&gt;4)-beta-D-GlcNAc)-L-asparaginyl-[protein] (N-glucan mannose isomer 5A1,2) + 4 beta-D-mannose. It carries out the reaction N(4)-(alpha-D-Man-(1-&gt;2)-alpha-D-Man-(1-&gt;2)-alpha-D-Man-(1-&gt;3)-[alpha-D-Man-(1-&gt;3)-[alpha-D-Man-(1-&gt;2)-alpha-D-Man-(1-&gt;6)]-alpha-D-Man-(1-&gt;6)]-beta-D-Man-(1-&gt;4)-beta-D-GlcNAc-(1-&gt;4)-beta-D-GlcNAc)-L-asparaginyl-[protein] (N-glucan mannose isomer 8A1,2,3B1,3) + 3 H2O = N(4)-(alpha-D-Man-(1-&gt;3)-[alpha-D-Man-(1-&gt;3)-[alpha-D-Man-(1-&gt;6)]-alpha-D-Man-(1-&gt;6)]-beta-D-Man-(1-&gt;4)-beta-D-GlcNAc-(1-&gt;4)-beta-D-GlcNAc)-L-asparaginyl-[protein] (N-glucan mannose isomer 5A1,2) + 3 beta-D-mannose. The catalysed reaction is N(4)-(alpha-D-Man-(1-&gt;2)-alpha-D-Man-(1-&gt;2)-alpha-D-Man-(1-&gt;3)-[alpha-D-Man-(1-&gt;2)-alpha-D-Man-(1-&gt;3)-[alpha-D-Man-(1-&gt;2)-alpha-D-Man-(1-&gt;6)]-alpha-D-Man-(1-&gt;6)]-beta-D-Man-(1-&gt;4)-beta-D-GlcNAc-(1-&gt;4)-beta-D-GlcNAc)-L-asparaginyl-[protein] (N-glucan mannose isomer 9A1,2,3B1,2,3) + H2O = N(4)-(alpha-D-Man-(1-&gt;2)-alpha-D-Man-(1-&gt;2)-alpha-D-Man-(1-&gt;3)-[alpha-D-Man-(1-&gt;3)-[alpha-D-Man-(1-&gt;2)-alpha-D-Man-(1-&gt;6)]-alpha-D-Man-(1-&gt;6)]-beta-D-Man-(1-&gt;4)-beta-D-GlcNAc-(1-&gt;4)-beta-D-GlcNAc)-L-asparaginyl-[protein] (N-glucan mannose isomer 8A1,2,3B1,3) + beta-D-mannose. It participates in protein modification; protein glycosylation. Its activity is regulated as follows. Inhibited by kifunensine and 1-deoxymannojirimycin, but not by swainsonine. Class I alpha-mannosidase essential for early N-glycan processing. Removes preferentially alpha-1,2-linked mannose residues from Man(9)GlcNAc(2) to produce Man(8)GlcNAc(2). Involved in root development and cell wall biosynthesis. This Arabidopsis thaliana (Mouse-ear cress) protein is Mannosyl-oligosaccharide 1,2-alpha-mannosidase MNS3 (MNS3).